The following is a 136-amino-acid chain: Large ribosomal subunit protein uL16 (136 aa).

Belongs to the universal ribosomal protein uL16 family. Part of the 50S ribosomal subunit.

Its function is as follows. Binds 23S rRNA and is also seen to make contacts with the A and possibly P site tRNAs. This chain is Large ribosomal subunit protein uL16, found in Shewanella piezotolerans (strain WP3 / JCM 13877).